The chain runs to 119 residues: Holo-[acyl-carrier-protein] synthase (119 aa).

Positions 8 and 58 each coordinate Mg(2+).

The protein belongs to the P-Pant transferase superfamily. AcpS family. The cofactor is Mg(2+).

Its subcellular location is the cytoplasm. It catalyses the reaction apo-[ACP] + CoA = holo-[ACP] + adenosine 3',5'-bisphosphate + H(+). Transfers the 4'-phosphopantetheine moiety from coenzyme A to a Ser of acyl-carrier-protein. The sequence is that of Holo-[acyl-carrier-protein] synthase from Bacillus cytotoxicus (strain DSM 22905 / CIP 110041 / 391-98 / NVH 391-98).